Reading from the N-terminus, the 1073-residue chain is uncharacterized protein (1073 aa).

An N-terminal signal peptide occupies residues 1-36 (MAEIIHHSNVFTWAFHVSEYDGAPLLLLGSFSSVAS). Asn132 carries an N-linked (GlcNAc...) asparagine glycan. 392-399 (ATAGIGKS) is an ATP binding site. Asn544, Asn632, Asn703, Asn732, and Asn953 each carry an N-linked (GlcNAc...) asparagine glycan.

This is an uncharacterized protein from Schizosaccharomyces pombe (strain 972 / ATCC 24843) (Fission yeast).